We begin with the raw amino-acid sequence, 623 residues long: Sulfite reductase [NADPH] flavoprotein alpha-component (623 aa).

A disordered region spans residues 1 to 32 (MSFQKNEYSHKNVSEDNNGQGGNPPIASPLND). One can recognise a Flavodoxin-like domain in the interval 87 to 225 (LTIIFASQTG…AAEEWRKNAL (139 aa)). FMN-binding positions include 93–98 (SQTGNA), 140–143 (STNG), and 176–185 (LGDSSYEFFC). Positions 258 to 472 (QNPYTATLLT…VEHNNNFKLP (215 aa)) constitute an FAD-binding FR-type domain. FAD is bound by residues Thr-346, Ala-380, 410–413 (RLYS), 428–430 (TVG), Tyr-434, and 443–446 (GGAS). Residues 543 to 544 (SR), 549 to 553 (KVYVQ), and Asp-585 each bind NADP(+). Tyr-623 is an FAD binding site.

Belongs to the NADPH-dependent sulphite reductase flavoprotein subunit CysJ family. This sequence in the N-terminal section; belongs to the flavodoxin family. It in the C-terminal section; belongs to the flavoprotein pyridine nucleotide cytochrome reductase family. In terms of assembly, alpha(8)-beta(8). The alpha component is a flavoprotein, the beta component is a hemoprotein. It depends on FAD as a cofactor. The cofactor is FMN.

The enzyme catalyses hydrogen sulfide + 3 NADP(+) + 3 H2O = sulfite + 3 NADPH + 4 H(+). Its pathway is sulfur metabolism; hydrogen sulfide biosynthesis; hydrogen sulfide from sulfite (NADPH route): step 1/1. Its function is as follows. Component of the sulfite reductase complex that catalyzes the 6-electron reduction of sulfite to sulfide. This is one of several activities required for the biosynthesis of L-cysteine from sulfate. The flavoprotein component catalyzes the electron flow from NADPH -&gt; FAD -&gt; FMN to the hemoprotein component. The protein is Sulfite reductase [NADPH] flavoprotein alpha-component of Vibrio parahaemolyticus serotype O3:K6 (strain RIMD 2210633).